The following is a 911-amino-acid chain: Gem-associated protein 4a (911 aa).

As to quaternary structure, component of the core survival motor neuron (SMN) complex composed of Smn, Gem2, Gem3, rig/Gem5 and one of 3 almost identical Gem4 paralogs encoded by Glos/Gem4a, Gem4b or Gem4c. Interacts with Smn; the interaction is probably indirect.

Component of the survival motor neuron (SMN) complex that catalyzes the assembly of small nuclear ribonucleoproteins (snRNPs), the building blocks of the spliceosome, and thereby plays an important role in the splicing of cellular pre-mRNAs. One of 3 almost identical paralogs (Glos/Gem4a, Gem4b and Gem4c), resulting from a genomic triplication, that have some redundant function. Required for neuromuscular function and organismal viability. The sequence is that of Gem-associated protein 4a from Drosophila melanogaster (Fruit fly).